The sequence spans 271 residues: Shikimate kinase (271 aa).

An ATP-binding site is contributed by 83–93 (PIAMGLKSSSA).

It belongs to the GHMP kinase family. Archaeal shikimate kinase subfamily.

The protein resides in the cytoplasm. The enzyme catalyses shikimate + ATP = 3-phosphoshikimate + ADP + H(+). Its pathway is metabolic intermediate biosynthesis; chorismate biosynthesis; chorismate from D-erythrose 4-phosphate and phosphoenolpyruvate: step 5/7. This chain is Shikimate kinase, found in Thermococcus kodakarensis (strain ATCC BAA-918 / JCM 12380 / KOD1) (Pyrococcus kodakaraensis (strain KOD1)).